We begin with the raw amino-acid sequence, 286 residues long: CDP-diacylglycerol--serine O-phosphatidyltransferase (286 aa).

6 consecutive transmembrane segments (helical) span residues 15 to 35, 74 to 94, 95 to 115, 135 to 155, 167 to 187, and 207 to 227; these read ILPSAMTVLSICAGLTAIKFA, IDSLADAVNFGVTPALVLYVS, MLSKWPVGWVVVLLYAVCVVL, EFFVGMPAPAGAVSMIGLLAL, GWFLSFWVTGTSILLVSGIPM, and LAICAAAAVLAPYLLIWVIII.

The protein belongs to the CDP-alcohol phosphatidyltransferase class-I family.

It localises to the cell membrane. The catalysed reaction is a CDP-1,2-diacyl-sn-glycerol + L-serine = a 1,2-diacyl-sn-glycero-3-phospho-L-serine + CMP + H(+). The protein is CDP-diacylglycerol--serine O-phosphatidyltransferase (pssA) of Mycobacterium tuberculosis (strain ATCC 25618 / H37Rv).